A 754-amino-acid chain; its full sequence is Polyadenylate-binding protein, cytoplasmic and nuclear (754 aa).

Residues 1–25 are compositionally biased toward polar residues; it reads MSAEVSTTPAADNVNGTPEATNAAA. Residues 1–52 are disordered; the sequence is MSAEVSTTPAADNVNGTPEATNAAATSAPEVTAVESSSPTSPNNNNQPHSAS. Low complexity predominate over residues 36-46; sequence SSSPTSPNNNN. RRM domains lie at 51–129, 139–216, 232–309, and 335–465; these read ASLY…WSQR, GNVF…HHIS, TNIY…RAQK, and VNLY…LAQR. Disordered regions lie at residues 365–420 and 595–648; these read KVMR…KKSD and RGGG…EEAP. A compositionally biased stretch (basic and acidic residues) spans 366-420; it reads VMRDSTPAERTETPDSEKEKEVNKENEKKEDEEKAAEEKPKESDEEKKDETKKSD. Positions 610–633 are enriched in gly residues; the sequence is GMRGPGYQGRGGPQGGPRPQGGRG. The span at 634–648 shows a compositional bias: low complexity; sequence QNAAAQPAAGREEAP. The PABC domain maps to 649–726; sequence AGALTAQALN…ALSVYDEYMK (78 aa). Residues 729–754 form a disordered region; that stretch reads GEGEAPADADKPKEAAKETATEENKS.

This sequence belongs to the polyadenylate-binding protein type-1 family.

The protein localises to the cytoplasm. The protein resides in the nucleus. Binds the poly(A) tail of mRNA. Appears to be an important mediator of the multiple roles of the poly(A) tail in mRNA biogenesis, stability and translation. In the nucleus, involved in both mRNA cleavage and polyadenylation. Is also required for efficient mRNA export to the cytoplasm. Acts in concert with a poly(A)-specific nuclease (PAN) to affect poly(A) tail shortening, which may occur concomitantly with either nucleocytoplasmic mRNA transport or translational initiation. In the cytoplasm, stimulates translation initiation and regulates mRNA decay through translation termination-coupled poly(A) shortening, probably mediated by PAN. The protein is Polyadenylate-binding protein, cytoplasmic and nuclear (pab1) of Aspergillus clavatus (strain ATCC 1007 / CBS 513.65 / DSM 816 / NCTC 3887 / NRRL 1 / QM 1276 / 107).